The primary structure comprises 213 residues: Embryo-specific protein ATS3 (213 aa).

Positions 1–21 (MTFPSLSVSFLFFAFIFVTHA) are cleaved as a signal peptide. One can recognise a PLAT domain in the interval 34 to 148 (CPYTVVVMTS…LNTWYGHNNC (115 aa)). Residues 147–188 (NCNTTGRPSSPDLPPPHFPPEFPPETPTTPPPPPPRPSAASR) are disordered. N-linked (GlcNAc...) asparagine glycosylation occurs at N149. Pro residues predominate over residues 157-183 (PDLPPPHFPPEFPPETPTTPPPPPPRP).

As to expression, expressed in seeds. Expression is restricted to the developing embryo.

The protein resides in the secreted. Functionally, may play a role during embryo development. This chain is Embryo-specific protein ATS3, found in Arabidopsis thaliana (Mouse-ear cress).